The primary structure comprises 541 residues: Carotenoid 9,10(9',10')-cleavage dioxygenase 1 (541 aa).

Fe cation contacts are provided by histidine 222, histidine 270, histidine 336, and histidine 526.

The protein belongs to the carotenoid oxygenase family. Fe(2+) is required as a cofactor.

It catalyses the reaction all-trans-zeaxanthin + 2 O2 = 4,9-dimethyldodeca-2,4,6,8,10-pentaenedial + 2 (3R)-hydroxy-beta-ionone. Its function is as follows. Cleaves a variety of carotenoids at the 9-10 and 9'-10' double bonds. Probably not involved in abscisic acid biosynthesis. This is Carotenoid 9,10(9',10')-cleavage dioxygenase 1 (CCD1) from Pisum sativum (Garden pea).